A 163-amino-acid polypeptide reads, in one-letter code: Transcription elongation factor GreA (163 aa).

Residues 45-65 adopt a coiled-coil conformation; it reads NAEYHAAREKQAFIEARINEL.

This sequence belongs to the GreA/GreB family.

In terms of biological role, necessary for efficient RNA polymerase transcription elongation past template-encoded arresting sites. The arresting sites in DNA have the property of trapping a certain fraction of elongating RNA polymerases that pass through, resulting in locked ternary complexes. Cleavage of the nascent transcript by cleavage factors such as GreA or GreB allows the resumption of elongation from the new 3'terminus. GreA releases sequences of 2 to 3 nucleotides. The chain is Transcription elongation factor GreA from Helicobacter hepaticus (strain ATCC 51449 / 3B1).